The following is a 351-amino-acid chain: V-type proton ATPase subunit d2 (351 aa).

The protein belongs to the V-ATPase V0D/AC39 subunit family. V-ATPase is a heteromultimeric enzyme composed of a peripheral catalytic V1 complex (components A to H) attached to an integral membrane V0 proton pore complex (components: a, c, c'', d and e).

It is found in the vacuole membrane. Its function is as follows. Subunit of the integral membrane V0 complex of vacuolar ATPase. Vacuolar ATPase is responsible for acidifying a variety of intracellular compartments in eukaryotic cells, thus providing most of the energy required for transport processes in the vacuolar system. In Arabidopsis thaliana (Mouse-ear cress), this protein is V-type proton ATPase subunit d2 (VHA-d2).